The sequence spans 463 residues: Probable multidrug resistance protein YoeA (463 aa).

Transmembrane regions (helical) follow at residues 24–44 (LFLV…LVGM), 56–76 (VAAV…TIGI), 106–126 (FTFL…LDIL), 143–163 (ARIL…TTFL), 177–197 (IVST…MFGF), 202–222 (IYGS…VLMV), 256–276 (VPAS…ISFV), 293–313 (VASY…IFAA), 330–350 (VGIW…YVFS), 370–390 (LLMI…ISAT), 397–417 (VLWP…PVAF), and 427–447 (ILGV…LIYG).

Belongs to the multi antimicrobial extrusion (MATE) (TC 2.A.66.1) family.

It is found in the cell membrane. The polypeptide is Probable multidrug resistance protein YoeA (yoeA) (Bacillus subtilis (strain 168)).